The sequence spans 411 residues: Heparan-sulfate 6-O-sulfotransferase 1 (411 aa).

Residues 1 to 19 are Cytoplasmic-facing; that stretch reads MRRRRAGGRTMVERASKFV. The helical; Signal-anchor for type II membrane protein transmembrane segment at 20–37 threads the bilayer; it reads LVVAGSACFMLILYQYAG. The Lumenal portion of the chain corresponds to 38–411; that stretch reads PGLSLGAPGG…DYMSHIIEKW (374 aa). Residue 93-101 coordinates 3'-phosphoadenylyl sulfate; that stretch reads HIQKTGGTT. Residues 123-124, arginine 140, tryptophan 145, and histidine 150 contribute to the substrate site; that span reads KK. The active-site Proton acceptor is the histidine 150. 3'-phosphoadenylyl sulfate contacts are provided by arginine 185 and serine 193. Substrate contacts are provided by histidine 197 and tryptophan 204. A glycan (N-linked (GlcNAc...) asparagine) is linked at asparagine 264. A 3'-phosphoadenylyl sulfate-binding site is contributed by 317 to 319; it reads MQY. An N-linked (GlcNAc...) asparagine glycan is attached at asparagine 320. 323–324 contributes to the 3'-phosphoadenylyl sulfate binding site; the sequence is RA. Residues 352–386 adopt a coiled-coil conformation; that stretch reads KDLFQQRYQYKRQLERREQRLRNREERLLHRSKEA. Residues 380–401 form a disordered region; sequence LHRSKEALPREDPEEPGRVPTE.

This sequence belongs to the sulfotransferase 6 family. N-glycosylated. In terms of tissue distribution, expressed in fetal brain and liver.

The protein localises to the membrane. The catalysed reaction is alpha-D-glucosaminyl-[heparan sulfate](n) + 3'-phosphoadenylyl sulfate = 6-sulfo-alpha-D-glucosaminyl-[heparan sulfate](n) + adenosine 3',5'-bisphosphate + H(+). Its function is as follows. 6-O-sulfation enzyme which catalyzes the transfer of sulfate from 3'-phosphoadenosine 5'-phosphosulfate (PAPS) to position 6 of the N-sulfoglucosamine residue (GlcNS) of heparan sulfate. Critical for normal neuronal development where it may play a role in neuron branching. May also play a role in limb development. May prefer iduronic acid. The sequence is that of Heparan-sulfate 6-O-sulfotransferase 1 from Mus musculus (Mouse).